The sequence spans 621 residues: GPI-anchor transamidase component GPAA1 (621 aa).

The Cytoplasmic portion of the chain corresponds to 1 to 19; the sequence is MGLLSDPVRRRALARIVLR. Residues 20 to 41 traverse the membrane as a helical segment; it reads LNTPLCVLSYVAGIAWFLALAF. The Lumenal segment spans residues 42-370; it reads PPLTQRTYMS…LLPALSRFVS (329 aa). A 2-acyl-6-[6-phosphoethanolamine-alpha-D-mannosyl-(1-&gt;2)-6-phosphoethanolamine-alpha-D-mannosyl-(1-&gt;6)-2-phosphoethanolamine-alpha-D-mannosyl-(1-&gt;4)-alpha-D-glucosaminyl]-1-(1-radyl,2-acyl-sn-glycero-3-phospho)-1D-myo-inositol contacts are provided by tyrosine 49 and serine 51. The N-linked (GlcNAc...) asparagine glycan is linked to asparagine 203. Cysteine 259 and cysteine 266 form a disulfide bridge. 3 residues coordinate a 2-acyl-6-[6-phosphoethanolamine-alpha-D-mannosyl-(1-&gt;2)-6-phosphoethanolamine-alpha-D-mannosyl-(1-&gt;6)-2-phosphoethanolamine-alpha-D-mannosyl-(1-&gt;4)-alpha-D-glucosaminyl]-1-(1-radyl,2-acyl-sn-glycero-3-phospho)-1D-myo-inositol: histidine 354, glutamine 355, and serine 356. Glutamine 355 contributes to the Mg(2+) binding site. The helical transmembrane segment at 371–393 threads the bilayer; that stretch reads IGLYMPATGFLLLVLGLKALELW. Residues 394-425 lie on the Cytoplasmic side of the membrane; the sequence is MQLHQAGVNPEEAGKAPSPGTPLLPTQGVGLA. The chain crosses the membrane as a helical span at residues 426-450; that stretch reads SLTAPLLISQAMGLALYFLPVLGQH. Residues 451–462 lie on the Lumenal side of the membrane; it reads LATQHFPVAEAE. The helical transmembrane segment at 463 to 483 threads the bilayer; the sequence is AVVLTLLAIYVAGLALPHNTH. Over 484 to 495 the chain is Cytoplasmic; the sequence is RVVNSQVPDRGW. Transmembrane regions (helical) follow at residues 496 to 519 and 520 to 536; these read MALK…LNFS and LGFL…ALAK. Residues 537–540 lie on the Cytoplasmic side of the membrane; that stretch reads PHGP. A helical transmembrane segment spans residues 541–563; that stretch reads RTLYAALLVVTSPAVTLFGSLFL. The Lumenal segment spans residues 564–597; the sequence is WRELLEVPLSLAEGWQLFLTALAQGVLEHYTYGA. Residues 598 to 619 traverse the membrane as a helical segment; the sequence is LLFPILALGLYPCWLLFWNVLF. The Cytoplasmic portion of the chain corresponds to 620-621; that stretch reads WK.

In terms of assembly, heteropentamer. Part of the GPI-anchor transamidase complex, consisting of PIGK, PIGT, PIGS, PIGU and GAA1. Interacts with PIGK. Ubiquitously expressed in fetal and adult tissues. Expressed at higher levels in fetal tissues than adult tissues. In embryos abundant in the choroid plexus, skeletal muscle,.

The protein resides in the endoplasmic reticulum membrane. It participates in glycolipid biosynthesis; glycosylphosphatidylinositol-anchor biosynthesis. Its function is as follows. Component of the glycosylphosphatidylinositol-anchor (GPI-anchor) transamidase (GPI-T) complex that catalyzes the formation of the linkage between a proprotein and a GPI-anchor and participates in GPI anchored protein biosynthesis. Binds GPI-anchor. In Mus musculus (Mouse), this protein is GPI-anchor transamidase component GPAA1.